The primary structure comprises 682 residues: Potassium-transporting ATPase ATP-binding subunit (682 aa).

Helical transmembrane passes span 34–54 (PVMFIVWIGSLLTTCISIAMA), 62–82 (ALFSAAISGWLWVTVLFANFA), 219–239 (IALTILLIALTIVFLLATATL), and 254–274 (VLVALLVCLIPTTIGGLLSAI). The active-site 4-aspartylphosphate intermediate is aspartate 307. Residues aspartate 344, glutamate 348, 377–384 (FTAQSRMS), and lysine 395 each bind ATP. 2 residues coordinate Mg(2+): aspartate 518 and aspartate 522. Transmembrane regions (helical) follow at residues 588–608 (FAIIPAAFAATYPQLNALNIM), 616–636 (AILSAVIFNALIIVFLIPLAL), and 656–676 (IYGLGGLLVPFIGIKVIDLLL).

The protein belongs to the cation transport ATPase (P-type) (TC 3.A.3) family. Type IA subfamily. In terms of assembly, the system is composed of three essential subunits: KdpA, KdpB and KdpC.

Its subcellular location is the cell inner membrane. The enzyme catalyses K(+)(out) + ATP + H2O = K(+)(in) + ADP + phosphate + H(+). Its function is as follows. Part of the high-affinity ATP-driven potassium transport (or Kdp) system, which catalyzes the hydrolysis of ATP coupled with the electrogenic transport of potassium into the cytoplasm. This subunit is responsible for energy coupling to the transport system and for the release of the potassium ions to the cytoplasm. The chain is Potassium-transporting ATPase ATP-binding subunit from Shigella boydii serotype 4 (strain Sb227).